The chain runs to 976 residues: MTESPTTTPGSTSGAPSGVPSGVNDAESDAPRHRYTAELAAGVERTWQQNWARLGTFNVPNPVGSLAPSDGSPVPEDKLFVQDMFPYPSGEGLHVGHPLGYIATDVFARYHRMKGRNVLHALGFDAFGLPAEQYAVQTGTHPRTRTEANVVNFRRQLGRLGLGHDSRRSFSTTDVEFYKWTQWIFLQIYNAWFDAAANKARPISELVAEFDSGARSLVDGRDWSTLSAGERADVIDDHRLVYRADSMVNWCPGLGTVLANEEVTSDGRSDRGNFPVFRKRLRQWMMRITAYSDRLLDDLDVLDWPDQVKTMQRNWIGRSTGASALFTATRSNGETVGLEVFTTRPDTLFGATYLVLAPEHDLVDDLVGAGWPAGVDPLWTGGGATPAEAVAAYRRAIAAKSDLERQESKEKTGVFLGSHAINPATGQPVPIFIADYVLAGYGTGAIMAVPGHDQRDWDFARALGLPVVEVIAGGDISQAAYTGDGVLVNSGFLDGMSVGEAKQAITARLESDGHGQARIEFKLRDWLFARQRYWGEPFPIVYDADGRPHALDESALPVELPDVPDYSPVLFDPDDANSEPSPPLGKATEWVHVELDLGDGLKPYSRDTNVMPQWAGSSWYELRYTDPHNADRFCAKENETYWMGPRPAEHGPDDPGGVDLYVGGAEHAVLHLLYARFWHKVLYDLGHVSSREPYRKLINQGYIQAFAYTDARGSYVPAEEVIERDGGFVYPGADGEIEVFQEFGKIGKSLKNSISPDEICDDYGADTLRVYEMSMGPIEASRPWATKDVIGAYRFLQRVWRLVIDENTGEILVADTPAELDTDTLRALHRAIAGVAEDYAALRNNTAVAKLIEYTNFLTKRHRDAVPRAAIEPLVLMVAPLAPHLAEELWQRLGHTTSLAHGPFPAADPAYLIDDTVEYPVQVNGKVRGRVVVAADADDDAVKAAALADEKVQAFLAGASPRKVIVVAGRLVNLVV.

Residues 1–23 (MTESPTTTPGSTSGAPSGVPSGV) show a composition bias toward low complexity. The segment at 1–34 (MTESPTTTPGSTSGAPSGVPSGVNDAESDAPRHR) is disordered. Positions 86–97 (PYPSGEGLHVGH) match the 'HIGH' region motif. Residues 745 to 749 (KIGKS) carry the 'KMSKS' region motif. Lys748 lines the ATP pocket.

This sequence belongs to the class-I aminoacyl-tRNA synthetase family.

It is found in the cytoplasm. The enzyme catalyses tRNA(Leu) + L-leucine + ATP = L-leucyl-tRNA(Leu) + AMP + diphosphate. This is Leucine--tRNA ligase from Mycobacterium marinum (strain ATCC BAA-535 / M).